A 210-amino-acid chain; its full sequence is N-(5'-phosphoribosyl)anthranilate isomerase (210 aa).

The protein belongs to the TrpF family.

It carries out the reaction N-(5-phospho-beta-D-ribosyl)anthranilate = 1-(2-carboxyphenylamino)-1-deoxy-D-ribulose 5-phosphate. It participates in amino-acid biosynthesis; L-tryptophan biosynthesis; L-tryptophan from chorismate: step 3/5. In Staphylococcus aureus (strain MRSA252), this protein is N-(5'-phosphoribosyl)anthranilate isomerase.